The primary structure comprises 122 residues: uncharacterized protein (122 aa).

A helical transmembrane segment spans residues 9 to 25; the sequence is AFPSPVFLGGVFFVFFF.

The protein resides in the cytoplasm. It is found in the nucleus. Its subcellular location is the membrane. This is an uncharacterized protein from Saccharomyces cerevisiae (strain ATCC 204508 / S288c) (Baker's yeast).